Reading from the N-terminus, the 327-residue chain is Cysteine synthase (327 aa).

At Lys65 the chain carries N6-(pyridoxal phosphate)lysine. Residues Asn95, 200–204 (GTGGT), and Ser282 each bind pyridoxal 5'-phosphate.

Belongs to the cysteine synthase/cystathionine beta-synthase family. The cofactor is pyridoxal 5'-phosphate.

It catalyses the reaction O-acetyl-L-serine + hydrogen sulfide = L-cysteine + acetate. It participates in amino-acid biosynthesis; L-cysteine biosynthesis; L-cysteine from L-serine: step 2/2. The chain is Cysteine synthase (cysM) from Aquifex aeolicus (strain VF5).